We begin with the raw amino-acid sequence, 509 residues long: Probable basic-leucine zipper transcription factor H (509 aa).

The segment at 1 to 42 (MMNSPRSLDSSDGSVDSSSVYSGTSSFGSSFTSSTGSGFTNS) is disordered. Over residues 10–39 (SSDGSVDSSSVYSGTSSFGSSFTSSTGSGF) the composition is skewed to low complexity. In terms of domain architecture, bZIP spans 50-113 (AKKKKIRQMQ…NENYLKINQL (64 aa)). The tract at residues 51–77 (KKKKIRQMQNRQSAAQYRERKKEYLEK) is basic motif. Residues 78-99 (LETIVDNLESDRNQLLQQTKQL) form a leucine-zipper region. 4 disordered regions span residues 134 to 185 (LLSK…SNNG), 223 to 275 (FSHL…SRFN), 290 to 414 (IENV…IINN), and 465 to 509 (SNNN…GIPK). Low complexity-rich tracts occupy residues 226 to 248 (LQQQ…SPIP), 255 to 269 (PIQQ…QNIN), 292 to 350 (NVNN…SNRS), 361 to 414 (QQQQ…IINN), 465 to 483 (SNNN…NSPS), and 490 to 509 (NGGI…GIPK).

It belongs to the bZIP family.

It is found in the nucleus. In terms of biological role, probable transcriptional regulator. In Dictyostelium discoideum (Social amoeba), this protein is Probable basic-leucine zipper transcription factor H (bzpH).